The primary structure comprises 488 residues: Histone deacetylase 2 (488 aa).

The interval 9-322 is histone deacetylase; that stretch reads KKKVCYYYDG…WTYETAVALD (314 aa). 1D-myo-inositol 1,4,5,6-tetrakisphosphate contacts are provided by Gly-28 and Lys-32. His-142 is a catalytic residue. Residues Asp-177, His-179, and Asp-265 each contribute to the Zn(2+) site. A 1D-myo-inositol 1,4,5,6-tetrakisphosphate-binding site is contributed by Arg-271. Positions 389 to 488 are disordered; the sequence is AVHEDSGDED…GAKSEQLSNP (100 aa). Residues 402–417 show a composition bias toward basic and acidic residues; that stretch reads PDKRISIRASDKRIAC. The span at 418–428 shows a compositional bias: acidic residues; the sequence is DEEFSDSEDEG. The segment covering 429-481 has biased composition (basic and acidic residues); that stretch reads EGGRRNVADHKKGAKKARIEEDKKETEDKKADVKEEDKSKDNSGEKTDTKGAK.

The protein belongs to the histone deacetylase family. HD type 1 subfamily. It depends on Zn(2+) as a cofactor.

It is found in the nucleus. It localises to the cytoplasm. The catalysed reaction is N(6)-acetyl-L-lysyl-[histone] + H2O = L-lysyl-[histone] + acetate. It carries out the reaction N(6)-acetyl-L-lysyl-[protein] + H2O = L-lysyl-[protein] + acetate. It catalyses the reaction N(6)-(2E)-butenoyl-L-lysyl-[protein] + H2O = (2E)-2-butenoate + L-lysyl-[protein]. The enzyme catalyses N(6)-(2-hydroxyisobutanoyl)-L-lysyl-[protein] + H2O = 2-hydroxy-2-methylpropanoate + L-lysyl-[protein]. The catalysed reaction is N(6)-[(S)-lactoyl]-L-lysyl-[protein] + H2O = (S)-lactate + L-lysyl-[protein]. With respect to regulation, inositol tetraphosphate (1D-myo-inositol 1,4,5,6-tetrakisphosphate) may act as an intermolecular glue between HDAC2 and N-Cor repressor complex components. Functionally, histone deacetylase that catalyzes the deacetylation of lysine residues on the N-terminal part of the core histones (H2A, H2B, H3 and H4). Histone deacetylation gives a tag for epigenetic repression and plays an important role in transcriptional regulation, cell cycle progression and developmental events. Histone deacetylases act via the formation of large multiprotein complexes. Also deacetylates non-histone proteins. In addition to protein deacetylase activity, also acts as a protein-lysine deacylase by recognizing other acyl groups: catalyzes removal of (2E)-butenoyl (crotonyl), lactoyl (lactyl) and 2-hydroxyisobutanoyl (2-hydroxyisobutyryl) acyl groups from lysine residues, leading to protein decrotonylation, delactylation and de-2-hydroxyisobutyrylation, respectively. The chain is Histone deacetylase 2 (HDAC2) from Gallus gallus (Chicken).